Consider the following 288-residue polypeptide: Plasmodesmata-located protein 6 (288 aa).

Residues methionine 1–alanine 22 form the signal peptide. Topologically, residues alanine 23 to threonine 256 are extracellular. 2 consecutive Gnk2-homologous domains span residues aspartate 25–phenylalanine 132 and aspartate 137–glycine 234. 6 cysteine pairs are disulfide-bonded: cysteine 32-cysteine 110, cysteine 84-cysteine 95, cysteine 98-cysteine 123, cysteine 145-cysteine 212, cysteine 188-cysteine 197, and cysteine 200-cysteine 225. The helical transmembrane segment at leucine 257–methionine 277 threads the bilayer. Residues leucine 257–methionine 277 form a necessary and sufficient for plasmodesmal targeting region. Residues alanine 278–lysine 288 are Cytoplasmic-facing.

Belongs to the cysteine-rich repeat secretory protein family. Plasmodesmata-located proteins (PDLD) subfamily. As to quaternary structure, (Microbial infection) Interacts with Grapevine fanleaf virus (GFLV) 2B-MP. As to expression, highly expressed in inflorescence silique (at mRNA level).

The protein resides in the cell membrane. It is found in the cell junction. It localises to the plasmodesma. Its function is as follows. Modulates cell-to-cell trafficking. In Arabidopsis thaliana (Mouse-ear cress), this protein is Plasmodesmata-located protein 6.